Consider the following 677-residue polypeptide: Methionine--tRNA ligase (677 aa).

The 'HIGH' region signature appears at 15–25 (PYANGSIHLGH). Residues Cys146, Cys149, Cys159, and Cys162 each coordinate Zn(2+). The 'KMSKS' region signature appears at 333-337 (KMSKS). Residue Lys336 coordinates ATP. The region spanning 575–677 (DFAKIDLRVA…SGAKPGQQVK (103 aa)) is the tRNA-binding domain.

It belongs to the class-I aminoacyl-tRNA synthetase family. MetG type 1 subfamily. As to quaternary structure, homodimer. Requires Zn(2+) as cofactor.

It localises to the cytoplasm. The catalysed reaction is tRNA(Met) + L-methionine + ATP = L-methionyl-tRNA(Met) + AMP + diphosphate. Its function is as follows. Is required not only for elongation of protein synthesis but also for the initiation of all mRNA translation through initiator tRNA(fMet) aminoacylation. The polypeptide is Methionine--tRNA ligase (Cronobacter sakazakii (strain ATCC BAA-894) (Enterobacter sakazakii)).